Reading from the N-terminus, the 238-residue chain is Lactate utilization protein A (238 aa).

This sequence belongs to the LutA/YkgE family.

In terms of biological role, is involved in L-lactate degradation and allows cells to grow with lactate as the sole carbon source. This Geobacillus sp. (strain WCH70) protein is Lactate utilization protein A.